We begin with the raw amino-acid sequence, 511 residues long: Histidine ammonia-lyase (511 aa).

Positions 142 to 144 (ASG) form a cross-link, 5-imidazolinone (Ala-Gly). S143 is subject to 2,3-didehydroalanine (Ser).

It belongs to the PAL/histidase family. In terms of processing, contains an active site 4-methylidene-imidazol-5-one (MIO), which is formed autocatalytically by cyclization and dehydration of residues Ala-Ser-Gly.

The protein localises to the cytoplasm. It catalyses the reaction L-histidine = trans-urocanate + NH4(+). It participates in amino-acid degradation; L-histidine degradation into L-glutamate; N-formimidoyl-L-glutamate from L-histidine: step 1/3. This chain is Histidine ammonia-lyase, found in Caulobacter sp. (strain K31).